Reading from the N-terminus, the 169-residue chain is Large ribosomal subunit protein uL10 (169 aa).

It belongs to the universal ribosomal protein uL10 family. Part of the 50S ribosomal subunit.

The protein is Large ribosomal subunit protein uL10 (rplJ) of Deinococcus radiodurans (strain ATCC 13939 / DSM 20539 / JCM 16871 / CCUG 27074 / LMG 4051 / NBRC 15346 / NCIMB 9279 / VKM B-1422 / R1).